The sequence spans 481 residues: Pentatricopeptide repeat-containing protein 8, mitochondrial (481 aa).

A mitochondrion-targeting transit peptide spans 1–55; sequence MQGFGSQIFRKLLRSSNAKVSDALLQNTRTLFTAPPLHSGLQTSFTAETQQHVRQ. PPR repeat units lie at residues 137-172 and 365-399; these read SARF…EFLP and SIST…GLKP.

It is found in the mitochondrion. Functionally, mitochondrial RNA-binding protein involved in mitochondrial translation. The cox1 mRNA is one target but it is not clear if ppr8 has a single or multiple targets. The protein is Pentatricopeptide repeat-containing protein 8, mitochondrial (ppr8) of Schizosaccharomyces pombe (strain 972 / ATCC 24843) (Fission yeast).